We begin with the raw amino-acid sequence, 545 residues long: Glucose-6-phosphate isomerase (545 aa).

Glu351 functions as the Proton donor in the catalytic mechanism. Residues His382 and Lys510 contribute to the active site.

The protein belongs to the GPI family.

It is found in the cytoplasm. It catalyses the reaction alpha-D-glucose 6-phosphate = beta-D-fructose 6-phosphate. The protein operates within carbohydrate biosynthesis; gluconeogenesis. It participates in carbohydrate degradation; glycolysis; D-glyceraldehyde 3-phosphate and glycerone phosphate from D-glucose: step 2/4. Its function is as follows. Catalyzes the reversible isomerization of glucose-6-phosphate to fructose-6-phosphate. The protein is Glucose-6-phosphate isomerase of Helicobacter pylori (strain P12).